The following is a 141-amino-acid chain: Large ribosomal subunit protein uL13 (141 aa).

Belongs to the universal ribosomal protein uL13 family. Part of the 50S ribosomal subunit.

In terms of biological role, this protein is one of the early assembly proteins of the 50S ribosomal subunit, although it is not seen to bind rRNA by itself. It is important during the early stages of 50S assembly. In Helicobacter pylori (strain Shi470), this protein is Large ribosomal subunit protein uL13.